A 739-amino-acid chain; its full sequence is Glycine--tRNA ligase (739 aa).

The transit peptide at Met1–Leu36 directs the protein to the mitochondrion. Position 35 is a phosphoserine (Ser35). Positions Val63–Val119 constitute a WHEP-TRS domain. The residue at position 204 (Lys204) is an N6-acetyllysine. Residue Glu299 coordinates glycine. Residues Arg331–Glu333 and Arg342–Val343 contribute to the ATP site. Residue Glu350 participates in glycine binding. A Phosphotyrosine modification is found at Tyr453. Glu457–Ile458 contacts ATP. N6-acetyllysine is present on Lys501. A glycine-binding site is contributed by Glu576 to Ser578. Arg583 contributes to the ATP binding site. Ser700 is subject to Phosphoserine. Thr736 is modified (phosphothreonine).

This sequence belongs to the class-II aminoacyl-tRNA synthetase family. As to quaternary structure, homodimer. In terms of tissue distribution, widely expressed, including in brain and spinal cord. As to expression, expressed in brain, spinal cord, muscle, heart and spleen. Expressed in brain, spinal cord, muscle, heart, spleen and liver.

Its subcellular location is the cytoplasm. It localises to the cell projection. It is found in the axon. The protein localises to the secreted. The protein resides in the extracellular exosome. Its subcellular location is the mitochondrion. The catalysed reaction is tRNA(Gly) + glycine + ATP = glycyl-tRNA(Gly) + AMP + diphosphate. The enzyme catalyses 2 ATP + H(+) = P(1),P(4)-bis(5'-adenosyl) tetraphosphate + diphosphate. Ap4A synthesis is inhibited by tRNA, via the disruption of the second ATP-binding site by direct blocking and/or by tRNA-induced conformational change. Catalyzes the ATP-dependent ligation of glycine to the 3'-end of its cognate tRNA, via the formation of an aminoacyl-adenylate intermediate (Gly-AMP). Also produces diadenosine tetraphosphate (Ap4A), a universal pleiotropic signaling molecule needed for cell regulation pathways, by direct condensation of 2 ATPs. Thereby, may play a special role in Ap4A homeostasis. This is Glycine--tRNA ligase from Homo sapiens (Human).